The following is a 154-amino-acid chain: UPF0178 protein H16_B0290 (154 aa).

Belongs to the UPF0178 family.

The chain is UPF0178 protein H16_B0290 from Cupriavidus necator (strain ATCC 17699 / DSM 428 / KCTC 22496 / NCIMB 10442 / H16 / Stanier 337) (Ralstonia eutropha).